A 715-amino-acid polypeptide reads, in one-letter code: Photosystem I P700 chlorophyll a apoprotein A1 (715 aa).

8 helical membrane passes run 60–83 (VFSA…FHGA), 146–169 (LYST…FHYH), 185–209 (LNHH…HVSL), 281–299 (TVHH…GHMY), 336–359 (WHAQ…HHMY), 375–401 (LSLF…IFMV), 423–445 (AIIS…LYIH), and 521–539 (FLVH…LILL). The [4Fe-4S] cluster site is built by cysteine 563 and cysteine 572. A run of 2 helical transmembrane segments spans residues 579-600 (HVFL…HFSW) and 654-676 (LSAY…MFLF). Residue histidine 665 coordinates chlorophyll a'. Positions 673 and 681 each coordinate chlorophyll a. Position 682 (tryptophan 682) interacts with phylloquinone. A helical membrane pass occupies residues 714-715 (AE).

The protein belongs to the PsaA/PsaB family. In terms of assembly, the PsaA/B heterodimer binds the P700 chlorophyll special pair and subsequent electron acceptors. PSI consists of a core antenna complex that captures photons, and an electron transfer chain that converts photonic excitation into a charge separation. The eukaryotic PSI reaction center is composed of at least 11 subunits. It depends on P700 is a chlorophyll a/chlorophyll a' dimer, A0 is one or more chlorophyll a, A1 is one or both phylloquinones and FX is a shared 4Fe-4S iron-sulfur center. as a cofactor.

The protein localises to the plastid. It is found in the chloroplast thylakoid membrane. It catalyses the reaction reduced [plastocyanin] + hnu + oxidized [2Fe-2S]-[ferredoxin] = oxidized [plastocyanin] + reduced [2Fe-2S]-[ferredoxin]. In terms of biological role, psaA and PsaB bind P700, the primary electron donor of photosystem I (PSI), as well as the electron acceptors A0, A1 and FX. PSI is a plastocyanin-ferredoxin oxidoreductase, converting photonic excitation into a charge separation, which transfers an electron from the donor P700 chlorophyll pair to the spectroscopically characterized acceptors A0, A1, FX, FA and FB in turn. Oxidized P700 is reduced on the lumenal side of the thylakoid membrane by plastocyanin. The sequence is that of Photosystem I P700 chlorophyll a apoprotein A1 from Phlegmariurus squarrosus (Rock tassel fern).